The sequence spans 879 residues: Protein translocase subunit SecA (879 aa).

Residues Gln86, 104 to 108 (GEGKT), and Asp500 each bind ATP. Zn(2+) contacts are provided by Cys863, Cys865, Cys874, and His875.

The protein belongs to the SecA family. As to quaternary structure, monomer and homodimer. Part of the essential Sec protein translocation apparatus which comprises SecA, SecYEG and auxiliary proteins SecDF-YajC and YidC. Zn(2+) is required as a cofactor.

The protein resides in the cell inner membrane. Its subcellular location is the cytoplasm. The catalysed reaction is ATP + H2O + cellular proteinSide 1 = ADP + phosphate + cellular proteinSide 2.. Part of the Sec protein translocase complex. Interacts with the SecYEG preprotein conducting channel. Has a central role in coupling the hydrolysis of ATP to the transfer of proteins into and across the cell membrane, serving both as a receptor for the preprotein-SecB complex and as an ATP-driven molecular motor driving the stepwise translocation of polypeptide chains across the membrane. The sequence is that of Protein translocase subunit SecA from Orientia tsutsugamushi (strain Ikeda) (Rickettsia tsutsugamushi).